Reading from the N-terminus, the 271-residue chain is Serine O-acetyltransferase (271 aa).

The active-site Acyl-thioester intermediate is the Cys112. His204 (proton acceptor) is an active-site residue. Glu206 is a catalytic residue.

This sequence belongs to the MetA family.

It carries out the reaction L-serine + acetyl-CoA = O-acetyl-L-serine + CoA. It participates in amino-acid biosynthesis; L-cysteine biosynthesis; L-cysteine from L-serine: step 1/2. Its function is as follows. Catalyzes the formation of O-acetylserine (OAS) from L-serine and acetyl-CoA. To a lesser extent, is also able to use succinyl-CoA and propionyl-CoA as acyl donors, but not butyryl-CoA. Does not acylate D-serine and L-homoserine. This Lacticaseibacillus casei (Lactobacillus casei) protein is Serine O-acetyltransferase.